We begin with the raw amino-acid sequence, 76 residues long: Acyl carrier protein (76 aa).

The Carrier domain occupies 1-76 (MAIFDDIKEV…DVVRYIETNK (76 aa)). At S36 the chain carries O-(pantetheine 4'-phosphoryl)serine.

The protein belongs to the acyl carrier protein (ACP) family. 4'-phosphopantetheine is transferred from CoA to a specific serine of apo-ACP by AcpS. This modification is essential for activity because fatty acids are bound in thioester linkage to the sulfhydryl of the prosthetic group.

The protein localises to the cytoplasm. It participates in lipid metabolism; fatty acid biosynthesis. Functionally, carrier of the growing fatty acid chain in fatty acid biosynthesis. The chain is Acyl carrier protein from Wolinella succinogenes (strain ATCC 29543 / DSM 1740 / CCUG 13145 / JCM 31913 / LMG 7466 / NCTC 11488 / FDC 602W) (Vibrio succinogenes).